The sequence spans 505 residues: ATP synthase subunit alpha (505 aa).

Residue 170–177 (GDRQTGKT) participates in ATP binding.

Belongs to the ATPase alpha/beta chains family. F-type ATPases have 2 components, CF(1) - the catalytic core - and CF(0) - the membrane proton channel. CF(1) has five subunits: alpha(3), beta(3), gamma(1), delta(1), epsilon(1). CF(0) has four main subunits: a(1), b(1), b'(1) and c(9-12).

The protein localises to the cellular thylakoid membrane. The enzyme catalyses ATP + H2O + 4 H(+)(in) = ADP + phosphate + 5 H(+)(out). Functionally, produces ATP from ADP in the presence of a proton gradient across the membrane. The alpha chain is a regulatory subunit. In Synechococcus sp. (strain RCC307), this protein is ATP synthase subunit alpha.